The primary structure comprises 336 residues: HTH-type transcriptional repressor PurR (336 aa).

The 55-residue stretch at 2–56 (ATIKDVARLAGVSTTTVSHVINKTRFVAETTQEKVMEAVKQLNYAPSAVARSLKC) folds into the HTH lacI-type domain. The H-T-H motif DNA-binding region spans 4–23 (IKDVARLAGVSTTTVSHVIN). A DNA-binding region spans residues 48–56 (SAVARSLKC). Hypoxanthine contacts are provided by Phe73, Lys189, Phe220, and Asp274.

Homodimer.

It participates in purine metabolism; purine nucleotide biosynthesis [regulation]. Its function is as follows. Is the main repressor of the genes involved in the de novo synthesis of purine nucleotides, regulating purB, purC, purEK, purF, purHD, purL, purMN and guaBA expression. PurR is allosterically activated to bind its cognate DNA by binding the purine corepressors, hypoxanthine or guanine, thereby effecting transcription repression. This is HTH-type transcriptional repressor PurR from Vibrio cholerae serotype O1 (strain ATCC 39315 / El Tor Inaba N16961).